The chain runs to 473 residues: Ribosomal RNA small subunit methyltransferase F (473 aa).

Residues 123–129, glutamate 147, aspartate 174, and aspartate 192 each bind S-adenosyl-L-methionine; that span reads AAAPGSK. Cysteine 245 serves as the catalytic Nucleophile.

Belongs to the class I-like SAM-binding methyltransferase superfamily. RsmB/NOP family.

It is found in the cytoplasm. It catalyses the reaction cytidine(1407) in 16S rRNA + S-adenosyl-L-methionine = 5-methylcytidine(1407) in 16S rRNA + S-adenosyl-L-homocysteine + H(+). Its function is as follows. Specifically methylates the cytosine at position 1407 (m5C1407) of 16S rRNA. The sequence is that of Ribosomal RNA small subunit methyltransferase F from Vibrio atlanticus (strain LGP32) (Vibrio splendidus (strain Mel32)).